We begin with the raw amino-acid sequence, 428 residues long: Serine hydroxymethyltransferase (428 aa).

120–122 (GHI) lines the (6S)-5,6,7,8-tetrahydrofolate pocket. N6-(pyridoxal phosphate)lysine is present on Lys-226.

It belongs to the SHMT family. Homodimer. It depends on pyridoxal 5'-phosphate as a cofactor.

Its subcellular location is the cytoplasm. The enzyme catalyses 5,10-methylenetetrahydromethanopterin + glycine + H2O = 5,6,7,8-tetrahydromethanopterin + L-serine. It functions in the pathway amino-acid biosynthesis; glycine biosynthesis; glycine from L-serine: step 1/1. Catalyzes the reversible interconversion of serine and glycine with tetrahydromethanopterin (H4MPT) serving as the one-carbon carrier. Also exhibits a pteridine-independent aldolase activity toward beta-hydroxyamino acids, producing glycine and aldehydes, via a retro-aldol mechanism. This is Serine hydroxymethyltransferase from Methanopyrus kandleri (strain AV19 / DSM 6324 / JCM 9639 / NBRC 100938).